Consider the following 507-residue polypeptide: Histidine ammonia-lyase (507 aa).

The 5-imidazolinone (Ala-Gly) cross-link spans 141–143; that stretch reads ASG. 2,3-didehydroalanine (Ser) is present on Ser-142.

This sequence belongs to the PAL/histidase family. In terms of processing, contains an active site 4-methylidene-imidazol-5-one (MIO), which is formed autocatalytically by cyclization and dehydration of residues Ala-Ser-Gly.

The protein resides in the cytoplasm. The catalysed reaction is L-histidine = trans-urocanate + NH4(+). It participates in amino-acid degradation; L-histidine degradation into L-glutamate; N-formimidoyl-L-glutamate from L-histidine: step 1/3. This chain is Histidine ammonia-lyase, found in Cereibacter sphaeroides (strain ATCC 17029 / ATH 2.4.9) (Rhodobacter sphaeroides).